A 741-amino-acid chain; its full sequence is Phage T7 exclusion protein (741 aa).

Residues 27–334 (FGNIAENISR…NSLIFLYPGM (308 aa)) enclose the KAP NTPase domain.

In terms of biological role, responsible for the exclusion of phage T7 by plasmid F. Growth of bacteriophage T7 is inhibited in cells of E.coli that carries the plasmid F. The polypeptide is Phage T7 exclusion protein (pifA) (Escherichia coli (strain K12)).